Consider the following 710-residue polypeptide: Dual specificity protein kinase shkE (710 aa).

3 stretches are compositionally biased toward low complexity: residues 83 to 94 (DVSDSNNNNSTS), 107 to 129 (NNNNNNNNNNNNNNNNNNNNNNN), and 197 to 208 (QKQQQSQASIQQ). Disordered regions lie at residues 83 to 136 (DVSD…PTVI) and 189 to 232 (QHLT…IPPE). One can recognise a Protein kinase domain in the interval 237 to 495 (DVKTDLLGGG…EVTQRMNEVL (259 aa)). Residues 243 to 251 (LGGGAYGKV) and K264 each bind ATP. Residue D359 is the Proton acceptor of the active site. The 111-residue stretch at 597 to 707 (WFHFDISRDI…CPITEIKVPY (111 aa)) folds into the SH2 domain.

Belongs to the protein kinase superfamily. Ser/Thr protein kinase family. SH2 domain-containing protein kinase subfamily.

Its subcellular location is the membrane. The catalysed reaction is L-seryl-[protein] + ATP = O-phospho-L-seryl-[protein] + ADP + H(+). It carries out the reaction L-threonyl-[protein] + ATP = O-phospho-L-threonyl-[protein] + ADP + H(+). Its function is as follows. Required for proper chemotaxis and phagocytosis; proper spatiotemporal control of F-actin levels in chemotaxing cells. Negative regulator of the PI3K (phosphatidylinositol 3 kinase) pathway. Predominantly phosphorylates serines and threonines and tyrosines at a lower level. This is Dual specificity protein kinase shkE (shkE) from Dictyostelium discoideum (Social amoeba).